The sequence spans 219 residues: MGDILGAVYDLGHRPYLARRTVYEDRLILSTNGNICRAINLLTHDNRTSLVYHNNTKRIRFRGLLCAYHRPYCGFRALCRVMLCSLPRLCDIPINGSRDFVADPTRLDSSVNELLVSTGLVIHYDRVHDVPIHTDGFEVVDFTTVFRGPGNFLLPNATNFPRPTTTDQVYMVCLVNTVDCVLRFESELTVWIHSGLYTGDVLDVDNNVIQAPDGVDDDD.

This Beta macrocarpa (Beet) protein is RNA-3 uncharacterized 24.7 kDa protein.